We begin with the raw amino-acid sequence, 438 residues long: 23S rRNA (uracil(1939)-C(5))-methyltransferase RlmD (438 aa).

Residues phenylalanine 4–arginine 68 enclose the TRAM domain. The [4Fe-4S] cluster site is built by cysteine 81, cysteine 87, cysteine 90, and cysteine 167. Residues glutamine 269, phenylalanine 298, asparagine 303, glutamate 319, asparagine 346, and aspartate 367 each coordinate S-adenosyl-L-methionine. The active-site Nucleophile is cysteine 393.

This sequence belongs to the class I-like SAM-binding methyltransferase superfamily. RNA M5U methyltransferase family. RlmD subfamily.

It catalyses the reaction uridine(1939) in 23S rRNA + S-adenosyl-L-methionine = 5-methyluridine(1939) in 23S rRNA + S-adenosyl-L-homocysteine + H(+). Its function is as follows. Catalyzes the formation of 5-methyl-uridine at position 1939 (m5U1939) in 23S rRNA. The polypeptide is 23S rRNA (uracil(1939)-C(5))-methyltransferase RlmD (Edwardsiella ictaluri (strain 93-146)).